Consider the following 307-residue polypeptide: Elongation factor Ts (307 aa).

The interval 80–83 (TDFV) is involved in Mg(2+) ion dislocation from EF-Tu.

It belongs to the EF-Ts family.

It localises to the cytoplasm. Associates with the EF-Tu.GDP complex and induces the exchange of GDP to GTP. It remains bound to the aminoacyl-tRNA.EF-Tu.GTP complex up to the GTP hydrolysis stage on the ribosome. This is Elongation factor Ts (tsf) from Zymomonas mobilis subsp. mobilis (strain ATCC 31821 / ZM4 / CP4).